The sequence spans 425 residues: Glutamate-1-semialdehyde 2,1-aminomutase (425 aa).

An N6-(pyridoxal phosphate)lysine modification is found at lysine 265.

Belongs to the class-III pyridoxal-phosphate-dependent aminotransferase family. HemL subfamily. Homodimer. Requires pyridoxal 5'-phosphate as cofactor.

It localises to the cytoplasm. The catalysed reaction is (S)-4-amino-5-oxopentanoate = 5-aminolevulinate. It functions in the pathway porphyrin-containing compound metabolism; protoporphyrin-IX biosynthesis; 5-aminolevulinate from L-glutamyl-tRNA(Glu): step 2/2. The chain is Glutamate-1-semialdehyde 2,1-aminomutase from Clostridium perfringens (strain SM101 / Type A).